Reading from the N-terminus, the 241-residue chain is MAEEQPQVELFVKAGSDGAKIGNCPFSQRLFMVLWLKGVTFNVTTVDTKRRTETVQKLCPGGQLPFLLYGTEVHTDTNKIEEFLEAVLCPPRYPKLAALNPESNTAGLDIFAKFSAYIKNSNPALNDNLEKGLLKALKVLDNYLTSPLPEEVDETSAEDEGVSQRKFLDGNELTLADCNLLPKLHIVQVVCKKYRGFTIPEAFRGVHRYLSNAYAREEFASTCPDDEEIELAYEQVAKALK.

N-acetylalanine is present on A2. Positions A2–P90 are required for insertion into the membrane. The residue at position 13 (K13) is an N6-acetyllysine. C24 provides a ligand contact to glutathione. S-glutathionyl cysteine; alternate is present on C24. Residues C24–S27 carry the G-site motif. Cysteines 24 and 59 form a disulfide. Residues F26–V46 traverse the membrane as a helical segment. Residues L64 and T77 each contribute to the glutathione site. One can recognise a GST C-terminal domain in the interval Y93–Y233. K119 is subject to N6-acetyllysine. S121 bears the Phosphoserine mark. Position 131 is an N6-acetyllysine (K131). Phosphoserine occurs at positions 156 and 211. Y233 carries the post-translational modification Phosphotyrosine.

Belongs to the chloride channel CLIC family. In terms of assembly, monomer. Homodimer (in vitro). Interacts with TRAPPC2. Dimerization requires a conformation change that leads to the exposure of a large hydrophobic surface. In vivo, this may lead to membrane insertion. Interacts with AKAP9. In terms of processing, hydrogen peroxide treatment causes a conformation change, leading to dimerization and formation of an intramolecular disulfide bond between Cys-24 and Cys-59. In terms of tissue distribution, expression is prominent in heart, placenta, liver, kidney and pancreas.

Its subcellular location is the nucleus. It is found in the nucleus membrane. It localises to the cytoplasm. The protein localises to the cell membrane. The protein resides in the endoplasmic reticulum. The catalysed reaction is L-dehydroascorbate + 2 glutathione = glutathione disulfide + L-ascorbate. The enzyme catalyses chloride(in) = chloride(out). It catalyses the reaction iodide(out) = iodide(in). It carries out the reaction thiocyanate(in) = thiocyanate(out). The catalysed reaction is nitrate(in) = nitrate(out). The enzyme catalyses bromide(in) = bromide(out). It catalyses the reaction fluoride(in) = fluoride(out). The oxidoreductase activity is inhibited by rapamycin, amphotericin B and IAA-94. The channel conductance is regulated by pH and redox membrane potential. Inhibited by IAA-94. Functionally, in the soluble state, catalyzes glutaredoxin-like thiol disulfide exchange reactions with reduced glutathione as electron donor. Reduces selenite and dehydroascorbate and may act as an antioxidant during oxidative stress response. Can insert into membranes and form voltage-dependent multi-ion conductive channels. Membrane insertion seems to be redox-regulated and may occur only under oxidizing conditions. Involved in regulation of the cell cycle. The sequence is that of Chloride intracellular channel protein 1 from Homo sapiens (Human).